The sequence spans 485 residues: Glutamyl-tRNA(Gln) amidotransferase subunit A (485 aa).

Active-site charge relay system residues include lysine 78 and serine 153. Catalysis depends on serine 177, which acts as the Acyl-ester intermediate.

It belongs to the amidase family. GatA subfamily. In terms of assembly, heterotrimer of A, B and C subunits.

The catalysed reaction is L-glutamyl-tRNA(Gln) + L-glutamine + ATP + H2O = L-glutaminyl-tRNA(Gln) + L-glutamate + ADP + phosphate + H(+). Functionally, allows the formation of correctly charged Gln-tRNA(Gln) through the transamidation of misacylated Glu-tRNA(Gln) in organisms which lack glutaminyl-tRNA synthetase. The reaction takes place in the presence of glutamine and ATP through an activated gamma-phospho-Glu-tRNA(Gln). The protein is Glutamyl-tRNA(Gln) amidotransferase subunit A of Bacillus cytotoxicus (strain DSM 22905 / CIP 110041 / 391-98 / NVH 391-98).